The following is a 154-amino-acid chain: CASP-like protein 5B3 (154 aa).

The Cytoplasmic segment spans residues 1–17 (MKDVVGSPGTWSGMSLR). A helical transmembrane segment spans residues 18–38 (VSQCVFAGASVVAMASAYGFS). Asn-39 carries N-linked (GlcNAc...) asparagine glycosylation. Residues 39–42 (NYTA) lie on the Extracellular side of the membrane. Residues 43–63 (FCYLIASMGLQLLWSFGLACL) traverse the membrane as a helical segment. At 64–77 (DIYSLQTKRDLHNP) the chain is on the cytoplasmic side. Residues 78–98 (VLVSLFVVGDWVTAILSFAAA) traverse the membrane as a helical segment. The Extracellular segment spans residues 99 to 129 (SASAGVTILFERDVHFCRMYPQLSCGRYELS). Residues 130-150 (VILAFITWSFIATSAVSMFWL) traverse the membrane as a helical segment. Residues 151-154 (LASL) lie on the Cytoplasmic side of the membrane.

The protein belongs to the Casparian strip membrane proteins (CASP) family. As to quaternary structure, homodimer and heterodimers.

Its subcellular location is the cell membrane. The chain is CASP-like protein 5B3 from Oryza sativa subsp. indica (Rice).